Here is a 334-residue protein sequence, read N- to C-terminus: MLALAKILLISTLFYSLLSGSHGKENQDINTTQNIAEVFKTMENKPISLESEANLNSDKENITTSNLKASHSPPLNLPNNSHGITDFSSNSSAEHSLGSLKPTSTISTSPPLIHSFVSKVPWNAPIADEDLLPISAHPNATPALSSENFTWSLVNDTVKTPDNSSITVSILSSEPTSPSVTPLIVEPSGWLTTNSDSFTGFTPYQEKTTLQPTLKFTNNSKLFPNTSDPQKENRNTGIVFGAILGAILGVSLLTLVGYLLCGKRKTDSFSHRRLYDDRNEPVLRLDNAPEPYDVSFGNSSYYNPTLNDSAMPESEENARDGIPMDDIPPLRTSV.

The N-terminal stretch at 1–23 (MLALAKILLISTLFYSLLSGSHG) is a signal peptide. At 24–236 (KENQDINTTQ…SDPQKENRNT (213 aa)) the chain is on the extracellular side. N-linked (GlcNAc...) asparagine glycosylation is found at N30, N61, N79, N90, N148, N155, N163, N218, and N225. Residues 64–104 (TSNLKASHSPPLNLPNNSHGITDFSSNSSAEHSLGSLKPTS) form a disordered region. The span at 77 to 94 (LPNNSHGITDFSSNSSAE) shows a compositional bias: polar residues. The chain crosses the membrane as a helical span at residues 237–257 (GIVFGAILGAILGVSLLTLVG). The Cytoplasmic segment spans residues 258–334 (YLLCGKRKTD…DDIPPLRTSV (77 aa)). The interval 304–334 (PTLNDSAMPESEENARDGIPMDDIPPLRTSV) is disordered.

In terms of processing, highly glycosylated (N- and O-linked carbohydrates). Expressed in spleen, thymus, prostate, testis, ovary, small intestine, colon, peripheral blood leukocyte, bone marrow, lymph node and lung.

It is found in the cell membrane. The protein resides in the secreted. May play a role in the cell adhesion to the extracellular matrix. The protein is Mucin-15 (MUC15) of Homo sapiens (Human).